A 330-amino-acid polypeptide reads, in one-letter code: Ribosomal RNA large subunit methyltransferase F (330 aa).

Belongs to the methyltransferase superfamily. METTL16/RlmF family.

It is found in the cytoplasm. It catalyses the reaction adenosine(1618) in 23S rRNA + S-adenosyl-L-methionine = N(6)-methyladenosine(1618) in 23S rRNA + S-adenosyl-L-homocysteine + H(+). Its function is as follows. Specifically methylates the adenine in position 1618 of 23S rRNA. This is Ribosomal RNA large subunit methyltransferase F from Pseudoalteromonas atlantica (strain T6c / ATCC BAA-1087).